The chain runs to 295 residues: MAEIHTMHNTKAGRVFDVCNILFLGGVGAITILPFLYIIAGSFATEAELAQRSFFIFPKTFTLDAYKYVFSTPTFLRSMGVSIFITVVGTAVQLFFTFTMAYPLAKRHVKGRNLLLNLVIFSMLFSGGMIPTYLVVKSLGLLDTYWALILPMAINPFNLIIIKNFFQQLPRELEESAKIDGCSEIGVFWRIALPLSKPVIATFALFYAVGIWNDFFHALLYINDSAKWPLQMVLRQVTILSDLTATNGDTMQNAVPPEQGIKLAVIVIATLPILAVYPFLQKHFAKGMLIGSVKG.

Helical transmembrane passes span 21-41 (ILFL…IIAG), 81-101 (VSIF…FTMA), 116-136 (LNLV…YLVV), 142-162 (LDTY…LIII), 199-219 (VIAT…FHAL), and 260-280 (GIKL…YPFL). In terms of domain architecture, ABC transmembrane type-1 spans 79 to 280 (MGVSIFITVV…LPILAVYPFL (202 aa)).

This sequence belongs to the binding-protein-dependent transport system permease family. CysTW subfamily.

Its subcellular location is the cell membrane. In Bacillus subtilis (strain 168), this protein is Protein LplC (lplC).